Reading from the N-terminus, the 643-residue chain is Methyl-accepting chemotaxis protein McpA (643 aa).

A helical transmembrane segment spans residues 24–44 (ILLSACGVVVLAFALFTLYND). Positions 49–273 (NTIRQNIEAS…GLPSAQWYIG (225 aa)) constitute a Cache domain. Residues 293-313 (IIAMLIAVAAIAGLLGLLIPV) traverse the membrane as a helical segment. The HAMP domain occupies 312–366 (PVLMSPLTTMGRAMRDIAEGEGDLTRRLAVQNKDEFGELATSFNRFVERIHASIS). A Methyl-accepting transducer domain is found at 371–607 (ATRLVHDLSE…SLNLDITQIN (237 aa)).

This sequence belongs to the methyl-accepting chemotaxis (MCP) protein family.

The protein resides in the cell membrane. Functionally, chemotactic-signal transducers respond to changes in the concentration of attractants and repellents in the environment, transduce a signal from the outside to the inside of the cell, and facilitate sensory adaptation through the variation of the level of methylation. McpA is a chemoreceptor that binds to 12 different L-amino acids and mediates chemotaxis toward these amino acids. This chain is Methyl-accepting chemotaxis protein McpA, found in Pseudomonas putida (strain ATCC 47054 / DSM 6125 / CFBP 8728 / NCIMB 11950 / KT2440).